Here is a 135-residue protein sequence, read N- to C-terminus: Class I hydrophobin 15 (135 aa).

The N-terminal stretch at methionine 1 to alanine 21 is a signal peptide. 4 cysteine pairs are disulfide-bonded: cysteine 50–cysteine 113, cysteine 57–cysteine 107, cysteine 58–cysteine 97, and cysteine 114–cysteine 127. A glycan (N-linked (GlcNAc...) asparagine) is linked at asparagine 131.

Belongs to the fungal hydrophobin family. In terms of assembly, self-assembles to form functional amyloid fibrils called rodlets. Self-assembly into fibrillar rodlets occurs spontaneously at hydrophobic:hydrophilic interfaces and the rodlets further associate laterally to form amphipathic monolayers.

It is found in the secreted. Its subcellular location is the cell wall. Its function is as follows. Aerial growth, conidiation, and dispersal of filamentous fungi in the environment rely upon a capability of their secreting small amphipathic proteins called hydrophobins (HPBs) with low sequence identity. Class I can self-assemble into an outermost layer of rodlet bundles on aerial cell surfaces, conferring cellular hydrophobicity that supports fungal growth, development and dispersal; whereas Class II form highly ordered films at water-air interfaces through intermolecular interactions but contribute nothing to the rodlet structure. In Pleurotus ostreatus (strain PC15) (Oyster mushroom), this protein is Class I hydrophobin 15.